We begin with the raw amino-acid sequence, 448 residues long: Ribosomal protein uS12 methylthiotransferase RimO (448 aa).

Residues 16–126 form the MTTase N-terminal domain; that stretch reads PRISFVSLGC…VVAAVHEAVP (111 aa). Positions 25, 61, 90, 157, 161, and 164 each coordinate [4Fe-4S] cluster. Residues 143 to 380 enclose the Radical SAM core domain; the sequence is LTPRHYAYLK…MEAQSHVSLR (238 aa). A TRAM domain is found at 383-448; sequence RAKVGKRLSV…DAYDLHGIAV (66 aa).

Belongs to the methylthiotransferase family. RimO subfamily. It depends on [4Fe-4S] cluster as a cofactor.

It localises to the cytoplasm. It catalyses the reaction L-aspartate(89)-[ribosomal protein uS12]-hydrogen + (sulfur carrier)-SH + AH2 + 2 S-adenosyl-L-methionine = 3-methylsulfanyl-L-aspartate(89)-[ribosomal protein uS12]-hydrogen + (sulfur carrier)-H + 5'-deoxyadenosine + L-methionine + A + S-adenosyl-L-homocysteine + 2 H(+). Functionally, catalyzes the methylthiolation of an aspartic acid residue of ribosomal protein uS12. This is Ribosomal protein uS12 methylthiotransferase RimO from Methylorubrum extorquens (strain PA1) (Methylobacterium extorquens).